Consider the following 263-residue polypeptide: PDZ domain-containing protein 9 (263 aa).

One can recognise a PDZ domain in the interval 30-109; the sequence is QTKLTVGSMG…GTILQIKVYR (80 aa).

The protein is PDZ domain-containing protein 9 (PDZD9) of Bos taurus (Bovine).